A 519-amino-acid polypeptide reads, in one-letter code: Exodeoxyribonuclease 7 large subunit (519 aa).

A disordered region spans residues 500 to 519; sequence VGRGKTRKPKEEPPAQGSLL.

It belongs to the XseA family. As to quaternary structure, heterooligomer composed of large and small subunits.

The protein resides in the cytoplasm. It carries out the reaction Exonucleolytic cleavage in either 5'- to 3'- or 3'- to 5'-direction to yield nucleoside 5'-phosphates.. In terms of biological role, bidirectionally degrades single-stranded DNA into large acid-insoluble oligonucleotides, which are then degraded further into small acid-soluble oligonucleotides. The sequence is that of Exodeoxyribonuclease 7 large subunit from Cereibacter sphaeroides (strain KD131 / KCTC 12085) (Rhodobacter sphaeroides).